The primary structure comprises 2517 residues: Serine/threonine-protein kinase ATR (2517 aa).

An HEAT repeat occupies 1178-1214; it reads EPMLEQIVNVLMAGCQHDDSQLQMASAKCLGELGAID. The FAT domain maps to 1509 to 2066; it reads LVSRASYNCG…LWMLLPHFKS (558 aa). Ser1569 carries the post-translational modification Phosphoserine. A Phosphotyrosine modification is found at Tyr1570. Ser1573 carries the phosphoserine modification. Thr1575 is subject to Phosphothreonine. A PI3K/PI4K catalytic domain is found at 2184–2508; that stretch reads FQESVLILRS…EATKVDNLAS (325 aa). The G-loop stretch occupies residues 2190–2196; the sequence is ILRSAAK. The catalytic loop stretch occupies residues 2360–2368; that stretch reads GLGDRHGEN. Residues 2380–2404 form an activation loop region; that stretch reads HVDFNCLFNQGELLPYPEVVPFRLT. Positions 2485-2517 constitute an FATC domain; it reads IPLSTEGQVNFLINEATKVDNLASMYIGWGAFL.

It belongs to the PI3/PI4-kinase family. ATM subfamily. Interacts with mus304. Mn(2+) serves as cofactor.

It localises to the nucleus. The enzyme catalyses L-seryl-[protein] + ATP = O-phospho-L-seryl-[protein] + ADP + H(+). It carries out the reaction L-threonyl-[protein] + ATP = O-phospho-L-threonyl-[protein] + ADP + H(+). Serine/threonine protein kinase which activates checkpoint signaling upon genotoxic stresses such as ionizing radiation (IR), ultraviolet light (UV), or DNA replication stalling, thereby acting as a DNA damage sensor. Recognizes the substrate consensus sequence [ST]-Q. Phosphorylates various proteins, which collectively inhibits DNA replication and mitosis and promotes DNA repair and recombination. Phosphorylates grp/CHK1. Phosphorylates 'Ser-137' of histone variant H2AX/H2AV at sites of DNA damage, thereby regulating DNA damage response mechanism. Essential for the DNA damage checkpoint in larval imaginal disks and neuroblasts and for the DNA replication checkpoint in the embryo. Also has an essential role during early nuclear divisions in embryos, where it is required to delay mitosis in response to incomplete DNA replication. Also plays an important role during meiosis, where it may monitor double-strand-break repair during meiotic crossing over, to regulate the progression of prophase I, and to enforce metaphase I delay observed at the end of oogenesis. Involved in telomere maintenance and prevention of telomere fusion; potentially functioning downstream of moi/modigliani. The sequence is that of Serine/threonine-protein kinase ATR (mei-41) from Drosophila melanogaster (Fruit fly).